We begin with the raw amino-acid sequence, 342 residues long: GTPase Obg (342 aa).

In terms of domain architecture, Obg spans 1–159 (MKFLDEAKVY…HWLWLRLKLI (159 aa)). The region spanning 160 to 327 (ADAGLVGLPN…ALRALMAAMD (168 aa)) is the OBG-type G domain. GTP is bound by residues 166 to 173 (GLPNAGKS), 191 to 195 (FTTLH), 212 to 215 (DIPG), 279 to 282 (SKAD), and 308 to 310 (SAA). Mg(2+) is bound by residues Ser-173 and Thr-193.

This sequence belongs to the TRAFAC class OBG-HflX-like GTPase superfamily. OBG GTPase family. In terms of assembly, monomer. The cofactor is Mg(2+).

The protein resides in the cytoplasm. An essential GTPase which binds GTP, GDP and possibly (p)ppGpp with moderate affinity, with high nucleotide exchange rates and a fairly low GTP hydrolysis rate. Plays a role in control of the cell cycle, stress response, ribosome biogenesis and in those bacteria that undergo differentiation, in morphogenesis control. The chain is GTPase Obg from Methylobacterium nodulans (strain LMG 21967 / CNCM I-2342 / ORS 2060).